The following is an 856-amino-acid chain: Leucine--tRNA ligase (856 aa).

The 'HIGH' region motif lies at Pro-53–His-63. A 'KMSKS' region motif is present at residues Lys-622 to Ser-626. Lys-625 is a binding site for ATP.

Belongs to the class-I aminoacyl-tRNA synthetase family.

The protein resides in the cytoplasm. The enzyme catalyses tRNA(Leu) + L-leucine + ATP = L-leucyl-tRNA(Leu) + AMP + diphosphate. This Prochlorococcus marinus (strain MIT 9301) protein is Leucine--tRNA ligase.